The chain runs to 671 residues: MRPKRLGRCCAGSRLGPGDPAALTCAPSPSASPAPEPSAQPQARGTGQRVGSRATSGSQFLSEARTGARPASEAGAKAGARRPSAFSAIQGDVRSMPDNSDAPWTRFVFQGPFGSRATGRGTGKAAGIWKTPAAYVGRRPGVSGPERAAFIRELEEALCPNLPPPVKKITQEDVKVMLYLLEELLPPVWESVTYGMVLQRERDLNTAARIGQSLVKQNSVLMEENSKLEALLGSAKEEILYLRHQVNLRDELLQLYSDSDEEDEDEEEEEEEKEAEEEQEEEEAEEDLQCAHPCDAPKLISQEALLHQHHCPQLEALQEKLRLLEEENHQLREEASQLDTLEDEEQMLILECVEQFSEASQQMAELSEVLVLRLENYERQQQEVARLQAQVLKLQQRCRMYGAETEKLQKQLASEKEIQMQLQEESVWVGSQLQDLREKYMDCGGMLIEMQEEVKTLRQQPPVSTGSATHYPYSVPLETLPGFQETLAEELRTSLRRMISDPVYFMERNYEMPRGDTSSLRYDFRYSEDREQVRGFEAEEGLMLAADIMRGEDFTPAEEFVPQEELGAAKKVPAEEGVMEEAELVSEETEGWEEVELELDEATRMNVVTSALEASGLGPSHLDMNYVLQQLANWQDAHYRRQLRWKMLQKGECPHGALPAASRTSCRSSCR.

Disordered regions lie at residues 1 to 83 (MRPK…ARRP) and 258 to 289 (DSDE…EDLQ). Residues 20-29 (PAALTCAPSP) show a composition bias toward low complexity. An HAP1 N-terminal domain is found at 106 to 461 (RFVFQGPFGS…EEVKTLRQQP (356 aa)). Residues 212–427 (QSLVKQNSVL…IQMQLQEESV (216 aa)) adopt a coiled-coil conformation. Residues 258–288 (DSDEEDEDEEEEEEEKEAEEEQEEEEAEEDL) are compositionally biased toward acidic residues.

As to quaternary structure, self-associates. Interacts with HTT/huntingtin; enhanced by an expanded polyglutamine repeat within HTT. Interacts with DCTN1; decreased in presence of HTT with expanded polyglutamine repeat. Interacts with KLC2. Interacts with ITPR1 and APP. Interacts with AR; decreased by an expanded polyglutamine repeat within AR. Interacts with YWHAZ. Interacts with BDNF and SORT1; probably forming a complex involved in proBDNF trafficking, degradation and processing. Interacts with TBP, AHI1, HGS and KALRN. Interacts with KIF5A, KIF5B, KIF5C and GABRB3; indicative for an HAP1:KIF5 complex transporting a GABA(A) receptor as cargo. Interacts with ATXN3; in STBs with ATXN3 poly-Gln region with 27 repeats (normal population) and 79 repeats (spinocerebellar ataxia 3 (SCA3) patients) associating in the same strength. Interacts with NTRK2; HAP1 stabilizes association of NTRK2 with SORT1 preventing NTRK2 degradation. Interacts with CFAP263. In terms of tissue distribution, predominantly expressed in brain. Selectively expressed in neurons.

It is found in the cytoplasm. The protein localises to the cell projection. Its subcellular location is the axon. It localises to the presynapse. The protein resides in the cytoskeleton. It is found in the dendritic spine. The protein localises to the dendrite. Its subcellular location is the lysosome. It localises to the endoplasmic reticulum. The protein resides in the mitochondrion. It is found in the nucleus. The protein localises to the cytoplasmic vesicle. Its subcellular location is the autophagosome. It localises to the early endosome. The protein resides in the growth cone. It is found in the neuron projection. The protein localises to the secretory vesicle. Its subcellular location is the synaptic vesicle. Functionally, originally identified as neuronal protein that specifically associates with HTT/huntingtin and the binding is enhanced by an expanded polyglutamine repeat within HTT possibly affecting HAP1 interaction properties. Both HTT and HAP1 are involved in intracellular trafficking and HAP1 is proposed to link HTT to motor proteins and/or transport cargos. Seems to play a role in vesicular transport within neurons and axons such as from early endosomes to late endocytic compartments and to promote neurite outgrowth. The vesicular transport function via association with microtubule-dependent transporters can be attenuated by association with mutant HTT. Involved in the axonal transport of BDNF and its activity-dependent secretion; the function seems to involve HTT, DCTN1 and a complex with SORT1. Involved in APP trafficking and seems to facilitate APP anterograde transport and membrane insertion thereby possibly reducing processing into amyloid beta. Involved in delivery of gamma-aminobutyric acid (GABA(A)) receptors to synapses; the function is dependent on kinesin motor protein KIF5 and is disrupted by HTT with expanded polyglutamine repeat. Involved in regulation of autophagosome motility by promoting efficient retrograde axonal transport. Seems to be involved in regulation of membrane receptor recycling and degradation, and respective signal transduction, including GABA(A) receptors, tyrosine kinase receptors, EGFR, IP3 receptor and androgen receptor. Among others suggested to be involved in control of feeding behavior (involving hypothalamic GABA(A) receptors), cerebellar and brainstem development (involving AHI1 and NTRK1/TrkA), postnatal neurogenesis (involving hypothalamic NTRK2/TrkB), and ITPR1/InsP3R1-mediated Ca(2+) release (involving HTT and possibly the effect of mutant HTT). Via association with DCTN1/dynactin p150-glued and HTT/huntingtin involved in cytoplasmic retention of REST in neurons. May be involved in ciliogenesis. Involved in regulation of exocytosis. Seems to be involved in formation of cytoplasmic inclusion bodies (STBs). In case of anomalous expression of TBP, can sequester a subset of TBP into STBs; sequestration is enhanced by an expanded polyglutamine repeat within TBP. HAP1-containing STBs have been proposed to play a protective role against neurodegeneration in Huntigton disease (HD) and spinocerebellar ataxia 17 (SCA17). This chain is Huntingtin-associated protein 1 (HAP1), found in Homo sapiens (Human).